Consider the following 129-residue polypeptide: Small ribosomal subunit protein uS9 (129 aa).

The protein belongs to the universal ribosomal protein uS9 family.

This chain is Small ribosomal subunit protein uS9, found in Helicobacter acinonychis (strain Sheeba).